The following is a 205-amino-acid chain: Putative endonuclease segE (205 aa).

The GIY-YIG domain occupies 1-84; it reads MYHFVYETTN…LIKSKNYYNM (84 aa).

This sequence to endonucleases of group I introns of fungi and phage. Mg(2+) serves as cofactor.

In terms of biological role, probably involved in the movement of the endonuclease-encoding DNA. The protein is Putative endonuclease segE (segE) of Escherichia coli (Bacteriophage T4).